We begin with the raw amino-acid sequence, 200 residues long: Large ribosomal subunit protein uL4 (200 aa).

Residues 43–71 (RAQKTRAEVSGSGKKPWRQKGTGRARSGD) are disordered.

The protein belongs to the universal ribosomal protein uL4 family. Part of the 50S ribosomal subunit.

One of the primary rRNA binding proteins, this protein initially binds near the 5'-end of the 23S rRNA. It is important during the early stages of 50S assembly. It makes multiple contacts with different domains of the 23S rRNA in the assembled 50S subunit and ribosome. Its function is as follows. Forms part of the polypeptide exit tunnel. The polypeptide is Large ribosomal subunit protein uL4 (Mannheimia succiniciproducens (strain KCTC 0769BP / MBEL55E)).